The following is a 2122-amino-acid chain: Pecanex-like protein 2 (2122 aa).

2 helical membrane passes run 36-53 (LYLW…HLAF) and 60-82 (ALFY…YRLH). 2 disordered regions span residues 92–164 (QHRS…ELPA) and 180–250 (QPEA…LVNP). Composition is skewed to polar residues over residues 146–157 (SRGQSVHSQHSS) and 185–203 (ASST…SQGR). N288 is a glycosylation site (N-linked (GlcNAc...) asparagine). Low complexity-rich tracts occupy residues 392 to 407 (VTSS…AESA) and 458 to 476 (PDRC…PGST). Disordered regions lie at residues 392 to 556 (VTSS…QIPN) and 575 to 634 (VVAP…PVFT). Positions 528-538 (STKEVVSDGEK) are enriched in basic and acidic residues. A glycan (N-linked (GlcNAc...) asparagine) is linked at N556. Positions 599-618 (TKEEAVENEKPNGRDPKPGK) are enriched in basic and acidic residues. Residues 625 to 634 (DPANGSPVFT) show a composition bias toward polar residues. 13 helical membrane-spanning segments follow: residues 825-845 (VAVL…NRGF), 849-869 (LWVL…LKSV), 882-902 (QIIA…ILLL), 933-953 (HLIV…FPQI), 976-998 (GITS…HAFC), 1010-1030 (HIPA…YHLS), 1080-1100 (LVIC…TVFL), 1105-1125 (FLSI…HHLL), 1174-1194 (YLLY…SISN), 1218-1238 (SFCN…FFHF), 1245-1265 (ESFL…GDLL), 1270-1290 (FVLA…HVFA), and 1305-1325 (TFAT…VIFI). 3 N-linked (GlcNAc...) asparagine glycosylation sites follow: N1393, N1534, and N1802. 2 disordered regions span residues 1858 to 1943 (SVGQ…SSGP) and 1955 to 1991 (STSV…TTGH). Positions 1888-1898 (ESRDGSTEQPR) are enriched in basic and acidic residues. The segment covering 1922–1942 (SQSVQAHSAISQRPPTLSSSG) has biased composition (polar residues). A compositionally biased stretch (low complexity) spans 1968–1981 (SRLSLHTSAASLHS). N-linked (GlcNAc...) asparagine glycosylation occurs at N2039. Positions 2097 to 2122 (VLCRRASQEDMGLDDTASQQSTSDEQ) are disordered. Residues 2112–2122 (TASQQSTSDEQ) are compositionally biased toward polar residues.

This sequence belongs to the pecanex family.

The protein resides in the membrane. May play a role in tumorigenesis. The chain is Pecanex-like protein 2 from Mus musculus (Mouse).